Consider the following 278-residue polypeptide: Probable endonuclease 4 (278 aa).

Positions 66, 106, 142, 176, 179, 213, 226, 228, and 258 each coordinate Zn(2+).

It belongs to the AP endonuclease 2 family. Zn(2+) serves as cofactor.

It catalyses the reaction Endonucleolytic cleavage to 5'-phosphooligonucleotide end-products.. Functionally, endonuclease IV plays a role in DNA repair. It cleaves phosphodiester bonds at apurinic or apyrimidinic (AP) sites, generating a 3'-hydroxyl group and a 5'-terminal sugar phosphate. The sequence is that of Probable endonuclease 4 from Halothermothrix orenii (strain H 168 / OCM 544 / DSM 9562).